The chain runs to 632 residues: Galactan 5-O-arabinofuranosyltransferase (632 aa).

13 consecutive transmembrane segments (helical) span residues 10-30, 45-65, 76-96, 162-182, 184-204, 206-226, 242-259, 263-282, 298-318, 344-364, 375-395, 409-429, and 434-454; these read QIVL…IAIA, ALTT…GGVW, LGGL…PLGA, WAIT…WQMI, FEYA…YSSP, PYAA…WSGL, GWAT…AATW, LLAY…ATAL, LAGI…PFLA, FPML…LWLI, ALMI…LTTL, LTVL…QSLA, and AVLS…SQDI. At 455–632 the chain is on the extracellular side; the sequence is PNVLRPDLTI…LAIRKPMGNA (178 aa).

It belongs to the glycosyltransferase 85 family.

Its subcellular location is the cell membrane. It catalyses the reaction Adds an alpha-D-arabinofuranosyl group from trans,octacis-decaprenylphospho-beta-D-arabinofuranose at the 5-O-position of the eighth, tenth and twelfth galactofuranose unit of the galactofuranan chain of [beta-D-galactofuranosyl-(1-&gt;5)-beta-D-galactofuranosyl-(1-&gt;6)]14-beta-D-galactofuranosyl-(1-&gt;5)-beta-D-galactofuranosyl-(1-&gt;4)-alpha-L-rhamnopyranosyl-(1-&gt;3)-N-acetyl-alpha-D-glucosaminyl-diphospho-trans,octacis-decaprenol.. The protein operates within cell wall biogenesis; cell wall polysaccharide biosynthesis. Involved in the biosynthesis of the arabinogalactan (AG) region of the mycolylarabinogalactan-peptidoglycan (mAGP) complex, an essential component of the mycobacterial cell wall. Catalyzes the addition of the first key arabinofuranosyl (Araf) residue from the sugar donor decaprenyl-phospho-arabinose (DPA) on the C-5 of a 6-linked galactofuranosyl (Galf) of the galactan domain, thus 'priming' the galactan for further elaboration by other arabinofuranosyltransferases. In Mycobacterium leprae (strain TN), this protein is Galactan 5-O-arabinofuranosyltransferase.